Reading from the N-terminus, the 310-residue chain is Phosphoribosylaminoimidazole-succinocarboxamide synthase (310 aa).

It belongs to the SAICAR synthetase family.

The catalysed reaction is 5-amino-1-(5-phospho-D-ribosyl)imidazole-4-carboxylate + L-aspartate + ATP = (2S)-2-[5-amino-1-(5-phospho-beta-D-ribosyl)imidazole-4-carboxamido]succinate + ADP + phosphate + 2 H(+). Its pathway is purine metabolism; IMP biosynthesis via de novo pathway; 5-amino-1-(5-phospho-D-ribosyl)imidazole-4-carboxamide from 5-amino-1-(5-phospho-D-ribosyl)imidazole-4-carboxylate: step 1/2. The polypeptide is Phosphoribosylaminoimidazole-succinocarboxamide synthase (Cytophaga hutchinsonii (strain ATCC 33406 / DSM 1761 / CIP 103989 / NBRC 15051 / NCIMB 9469 / D465)).